Consider the following 403-residue polypeptide: S-arrestin (403 aa).

The tract at residues His-11 to Arg-19 is interaction with RHO. Thr-231 is modified (phosphothreonine). Positions Arg-381–Glu-403 are disordered.

The protein belongs to the arrestin family. In terms of assembly, monomer. Homodimer. Homotetramer. Interacts with RHO (via the phosphorylated C-terminus). As to expression, detected in retina (at protein level).

The protein resides in the cell projection. Its subcellular location is the cilium. It is found in the photoreceptor outer segment. It localises to the membrane. Functionally, binds to photoactivated, phosphorylated RHO and terminates RHO signaling via G-proteins by competing with G-proteins for the same binding site on RHO. May play a role in preventing light-dependent degeneration of retinal photoreceptor cells. The polypeptide is S-arrestin (Sag) (Mus musculus (Mouse)).